The sequence spans 147 residues: Orcokinin peptides (147 aa).

A signal peptide spans 1–27; it reads MPRHSVFALSILALSITATVWIPTVQA. 2 consecutive propeptides follow at residues 28–89 and 146–147; these read ETNL…ERFG and FG.

It belongs to the orcokinin family.

It localises to the secreted. In terms of biological role, myotropic peptides. The chain is Orcokinin peptides from Apis mellifera (Honeybee).